Here is a 490-residue protein sequence, read N- to C-terminus: Cytochrome P450 2C26 (490 aa).

Cys435 contacts heme.

This sequence belongs to the cytochrome P450 family. The cofactor is heme.

It localises to the endoplasmic reticulum membrane. Its subcellular location is the microsome membrane. The catalysed reaction is an organic molecule + reduced [NADPH--hemoprotein reductase] + O2 = an alcohol + oxidized [NADPH--hemoprotein reductase] + H2O + H(+). Catalyzes the hydroxylation of tolbutamide and the N-demethylation of aminopyrine and benzphetamine. The polypeptide is Cytochrome P450 2C26 (CYP2C26) (Mesocricetus auratus (Golden hamster)).